Reading from the N-terminus, the 390-residue chain is MLGLKGCLTILIGYVIAVCALFSSRGRNPSLTDWEKLKDQKISNIDNFGLTGQHLLEFFQENLPFLSFSEEKYRHKHVSLYYDVFKEYILRRASSKKCLPVDSAIAKLNKDVNPMPVHSHNDYWRKLPLFEGLAYGASSTEADVWNIDEKILAVGHNEAYLDPVELTLDKLYTGPLLEILDEVNCQDSDSDRKNGVFFNSPETSLFFYIDFKSDDNELTYKLLMEQYFKSLIDSGYLTYYDMKKDEIIWRPVTVILTGNYPTSLDILDNGNDNGYFESNQRFAFLDAPLLSLEPKYSKLSVAATVSFSQLMKHCGSDHWKVSLRGRMDSNEISCAKSIIDGAHALKLKTRIWGAPTWPANLVETISRQIIHDLGSDLLNLDNLFMASSLI.

Residues 1-26 (MLGLKGCLTILIGYVIAVCALFSSRG) form the signal peptide.

This sequence belongs to the AIM6 family.

The chain is Altered inheritance of mitochondria protein 6 (AIM6) from Saccharomyces cerevisiae (strain YJM789) (Baker's yeast).